The primary structure comprises 160 residues: Major strawberry allergen Fra a 1-E (160 aa).

It belongs to the BetVI family. Monomer. Interacts with AP. As to expression, highly expressed in roots. Expressed in open flowers. Expressed at low levels in leaves, flower buds and fruits.

In terms of biological role, involved in the control of flavonoid biosynthesis in fruits, probably by binding directly to natural flavonoids. Binds the natural flavonoid quercetin-3-O-glucuronide with affinities in the low micromolar range. This chain is Major strawberry allergen Fra a 1-E, found in Fragaria ananassa (Strawberry).